Consider the following 537-residue polypeptide: [Pyruvate dehydrogenase [acetyl-transferring]]-phosphatase 1, mitochondrial (537 aa).

The N-terminal 71 residues, 1-71, are a transit peptide targeting the mitochondrion; sequence MPAPTQLFFP…WWQYTQGRRY (71 aa). The PPM-type phosphatase domain maps to 109 to 525; that stretch reads ILGFDSNQLP…DDITIIVVQF (417 aa). 2 residues coordinate Mn(2+): D144 and G145. K202 is subject to N6-acetyllysine. 2 residues coordinate Mn(2+): D418 and D516.

Belongs to the PP2C family. In terms of assembly, heterodimer of a catalytic (PDP1) and a regulatory (PDPR) subunit. Requires Mn(2+) as cofactor. Mg(2+) is required as a cofactor.

It localises to the mitochondrion. The catalysed reaction is O-phospho-L-seryl-[pyruvate dehydrogenase E1 alpha subunit] + H2O = L-seryl-[pyruvate dehydrogenase E1 alpha subunit] + phosphate. With respect to regulation, magnesium-dependent and calcium-stimulated. PDP1 activity strongly depends on its Ca(2+)-dependent binding to the lipoyl domain of E2 subunit of component of the pyruvate dehydrogenase complex. Its function is as follows. Mitochondrial enzyme that catalyzes the dephosphorylation and concomitant reactivation of the alpha subunit of the E1 component of the pyruvate dehydrogenase complex (PDC), thereby stimulating the conversion of pyruvate into acetyl-CoA. This Homo sapiens (Human) protein is [Pyruvate dehydrogenase [acetyl-transferring]]-phosphatase 1, mitochondrial.